The primary structure comprises 106 residues: Putative double-stranded DNA mimic protein VV1228 (106 aa).

This sequence belongs to the putative dsDNA mimic protein family.

In terms of biological role, may act as a double-stranded DNA (dsDNA) mimic. Probably regulates the activity of a dsDNA-binding protein. The polypeptide is Putative double-stranded DNA mimic protein VV1228 (Vibrio vulnificus (strain YJ016)).